Reading from the N-terminus, the 270-residue chain is tRNA pseudouridine synthase A (270 aa).

The active-site Nucleophile is D60. Residues 107–111 (FHARF) form an RNA binding region. Y118 contacts substrate. Positions 168–172 (QCQSR) are interaction with tRNA.

It belongs to the tRNA pseudouridine synthase TruA family. Homodimer.

It catalyses the reaction uridine(38/39/40) in tRNA = pseudouridine(38/39/40) in tRNA. Its function is as follows. Formation of pseudouridine at positions 38, 39 and 40 in the anticodon stem and loop of transfer RNAs. The polypeptide is tRNA pseudouridine synthase A (Escherichia fergusonii (strain ATCC 35469 / DSM 13698 / CCUG 18766 / IAM 14443 / JCM 21226 / LMG 7866 / NBRC 102419 / NCTC 12128 / CDC 0568-73)).